The sequence spans 325 residues: Diaminopimelate epimerase (325 aa).

Substrate-binding residues include Asn-11 and Asn-69. Cys-78 (proton donor) is an active-site residue. Substrate contacts are provided by residues 79 to 80 (GN), Asn-166, Asn-203, and 221 to 222 (ER). Catalysis depends on Cys-230, which acts as the Proton acceptor. 231 to 232 (GT) is a binding site for substrate.

Belongs to the diaminopimelate epimerase family. Homodimer.

Its subcellular location is the cytoplasm. It carries out the reaction (2S,6S)-2,6-diaminopimelate = meso-2,6-diaminopimelate. It functions in the pathway amino-acid biosynthesis; L-lysine biosynthesis via DAP pathway; DL-2,6-diaminopimelate from LL-2,6-diaminopimelate: step 1/1. In terms of biological role, catalyzes the stereoinversion of LL-2,6-diaminopimelate (L,L-DAP) to meso-diaminopimelate (meso-DAP), a precursor of L-lysine and an essential component of the bacterial peptidoglycan. The chain is Diaminopimelate epimerase from Ligilactobacillus salivarius (strain UCC118) (Lactobacillus salivarius).